Here is a 473-residue protein sequence, read N- to C-terminus: Photosystem II CP43 reaction center protein (473 aa).

A propeptide spanning residues 1–14 (MKTLYSLRRFYPVE) is cleaved from the precursor. Thr-15 is modified (N-acetylthreonine). Thr-15 is subject to Phosphothreonine. 5 consecutive transmembrane segments (helical) span residues 69 to 93 (LFEV…PHLA), 134 to 155 (LLGP…KDRN), 178 to 200 (KALY…RKIT), 255 to 275 (KPFA…LSYS), and 291 to 312 (WFNN…ASQA). A [CaMn4O5] cluster-binding site is contributed by Glu-367. A helical membrane pass occupies residues 447–471 (RARAAAAGFEKGIDRDFEPVLSMTP).

Belongs to the PsbB/PsbC family. PsbC subfamily. PSII is composed of 1 copy each of membrane proteins PsbA, PsbB, PsbC, PsbD, PsbE, PsbF, PsbH, PsbI, PsbJ, PsbK, PsbL, PsbM, PsbT, PsbX, PsbY, PsbZ, Psb30/Ycf12, at least 3 peripheral proteins of the oxygen-evolving complex and a large number of cofactors. It forms dimeric complexes. Binds multiple chlorophylls and provides some of the ligands for the Ca-4Mn-5O cluster of the oxygen-evolving complex. It may also provide a ligand for a Cl- that is required for oxygen evolution. PSII binds additional chlorophylls, carotenoids and specific lipids. serves as cofactor.

It localises to the plastid. It is found in the chloroplast thylakoid membrane. Its function is as follows. One of the components of the core complex of photosystem II (PSII). It binds chlorophyll and helps catalyze the primary light-induced photochemical processes of PSII. PSII is a light-driven water:plastoquinone oxidoreductase, using light energy to abstract electrons from H(2)O, generating O(2) and a proton gradient subsequently used for ATP formation. In Buxus microphylla (Littleleaf boxwood), this protein is Photosystem II CP43 reaction center protein.